The primary structure comprises 37 residues: Large ribosomal subunit protein bL36 (37 aa).

Belongs to the bacterial ribosomal protein bL36 family.

This is Large ribosomal subunit protein bL36 from Dechloromonas aromatica (strain RCB).